The primary structure comprises 748 residues: Catalase-peroxidase (748 aa).

Positions 92–238 (WHSAGTYRTG…LAAVQMGLIY (147 aa)) form a cross-link, tryptophyl-tyrosyl-methioninium (Trp-Tyr) (with M-264). His93 (proton acceptor) is an active-site residue. The tryptophyl-tyrosyl-methioninium (Tyr-Met) (with W-92) cross-link spans 238–264 (YVNPEGPDGNPDPLLAAKDIRDTFGRM). His279 contacts heme b.

Belongs to the peroxidase family. Peroxidase/catalase subfamily. As to quaternary structure, homodimer or homotetramer. Heme b serves as cofactor. Formation of the three residue Trp-Tyr-Met cross-link is important for the catalase, but not the peroxidase activity of the enzyme.

The enzyme catalyses H2O2 + AH2 = A + 2 H2O. The catalysed reaction is 2 H2O2 = O2 + 2 H2O. In terms of biological role, bifunctional enzyme with both catalase and broad-spectrum peroxidase activity. This is Catalase-peroxidase from Xanthomonas campestris pv. campestris (strain 8004).